A 356-amino-acid polypeptide reads, in one-letter code: Fructose-bisphosphate aldolase 1, chloroplastic (356 aa).

The N-terminal 6 residues, 1-6 (GLTIRA), are a transit peptide targeting the chloroplast. Substrate contacts are provided by Arg53 and Lys143. Glu183 acts as the Proton acceptor in catalysis. The active-site Schiff-base intermediate with dihydroxyacetone-P is Lys225.

Belongs to the class I fructose-bisphosphate aldolase family.

Its subcellular location is the plastid. The protein localises to the chloroplast. The catalysed reaction is beta-D-fructose 1,6-bisphosphate = D-glyceraldehyde 3-phosphate + dihydroxyacetone phosphate. The protein operates within carbohydrate degradation; glycolysis; D-glyceraldehyde 3-phosphate and glycerone phosphate from D-glucose: step 4/4. This is Fructose-bisphosphate aldolase 1, chloroplastic from Pisum sativum (Garden pea).